The primary structure comprises 81 residues: MKTLLLTLVVVTIVCLDLGYTMTCCNQQSSQPKTITTCAESSCYKKTWKDHHGTRIERGCGCPKVKPGVGLECCKTDECNN.

The first 21 residues, 1–21 (MKTLLLTLVVVTIVCLDLGYT), serve as a signal peptide directing secretion. 4 cysteine pairs are disulfide-bonded: cysteine 24–cysteine 43, cysteine 38–cysteine 60, cysteine 62–cysteine 73, and cysteine 74–cysteine 79.

Belongs to the three-finger toxin family. Short-chain subfamily. Type I alpha-neurotoxin sub-subfamily. Expressed by the venom gland.

Its subcellular location is the secreted. In terms of biological role, binds to muscle nicotinic acetylcholine receptor (nAChR) and inhibit acetylcholine from binding to the receptor, thereby impairing neuromuscular transmission. This chain is Short neurotoxin 2, found in Cryptophis nigrescens (Eastern small-eyed snake).